The sequence spans 755 residues: E3 ubiquitin-protein ligase TRIM56 (755 aa).

An RING-type zinc finger spans residues 21–60 (CKICLEQLRAPKTLPCLHTYCQDCLAQLADGGRVRCPECR). B box-type zinc fingers lie at residues 98–149 (KPAC…VVDL) and 164–205 (RQAA…CLPL). Residues Cys-169, His-172, Cys-192, and His-197 each coordinate Zn(2+). Positions 216 to 314 (LEGLLAGVDN…AAAFARRVLS (99 aa)) form a coiled coil. Residues 371 to 484 (EEQQPQKDGG…SPALGPNLDG (114 aa)) form a disordered region. Positions 392–404 (SQSRREDEPKTER) are enriched in basic and acidic residues. Phosphothreonine is present on residues Thr-418 and Thr-442. Positions 419–447 (PKEEKAQTTREEGAQTLEEDRAQTPHEDG) are enriched in basic and acidic residues. The segment covering 453–469 (RGGRPNKKKKFKGRLKS) has biased composition (basic residues). Position 475 is a phosphoserine (Ser-475).

Belongs to the TRIM/RBCC family. As to quaternary structure, homooligomer. Interacts with STING1. Interacts with TICAM1. In terms of processing, (Microbial infection) Preferentially ubiquitinated with 'Lys-48' and 'Lys-11'-linked ubiquitin chains by Salmonella effector SopA leading to proteasomal targeting and degradation. Post-translationally, autoubiquitinated. As to expression, widely expressed (at protein level).

The protein resides in the cytoplasm. It carries out the reaction S-ubiquitinyl-[E2 ubiquitin-conjugating enzyme]-L-cysteine + [acceptor protein]-L-lysine = [E2 ubiquitin-conjugating enzyme]-L-cysteine + N(6)-ubiquitinyl-[acceptor protein]-L-lysine.. It participates in protein modification; protein ubiquitination. In terms of biological role, E3 ubiquitin-protein ligase that plays a key role in innate antiviral immunity by mediating ubiquitination of CGAS and STING1. In response to pathogen- and host-derived double-stranded DNA (dsDNA), targets STING1 to 'Lys-63'-linked ubiquitination, thereby promoting its homodimerization, a step required for the production of type I interferon IFN-beta. Also mediate monoubiquitination of CGAS, thereby promoting CGAS oligomerization and subsequent activation. Promotes also TNFalpha-induced NF-kappa-B signaling by mediating 'Lys-63'-linked ubiquitination TAK1, leading to enhanced interaction between TAK1 and CHUK/IKKalpha. Independently of its E3 ubiquitin ligase activity, positive regulator of TLR3 signaling. Potentiates extracellular double stranded RNA (dsRNA)-induced expression of IFNB1 and interferon-stimulated genes ISG15, IFIT1/ISG56, CXCL10, OASL and CCL5/RANTES. Promotes establishment of an antiviral state by TLR3 ligand and TLR3-mediated chemokine induction following infection by hepatitis C virus. Acts as a restriction factor of Zika virus through direct interaction with the viral RNA via its C-terminal region. This is E3 ubiquitin-protein ligase TRIM56 from Homo sapiens (Human).